The following is a 461-amino-acid chain: mRNA cap guanine-N(7) methyltransferase (461 aa).

The tract at residues 1 to 117 (MESSVKASVD…RKLQPQDALE (117 aa)) is disordered. Serine 11, serine 15, serine 16, and serine 58 each carry phosphoserine. Polar residues-rich tracts occupy residues 14–29 (ESSP…SGQR) and 49–58 (EQNSSYVQDS). Residues 65–93 (LDVEIILDEKHSEDDGGASKRSKLERGGG) show a composition bias toward basic and acidic residues. A phosphoserine mark is found at serine 94 and serine 99. The short motif at 107-109 (KRK) is the Nuclear localization signal element. The mRNA cap 0 methyltransferase domain occupies 152–460 (SRIFYLRNFN…IYLVFAFEKQ (309 aa)). 161–162 (NN) is an mRNA binding site. The S-adenosyl-L-methionine site is built by lysine 165, glycine 190, aspartate 212, aspartate 246, glutamine 269, and tyrosine 274.

It belongs to the class I-like SAM-binding methyltransferase superfamily. mRNA cap 0 methyltransferase family. As to quaternary structure, interacts with importin alpha, leading to stimulate both RNA-binding and methyltransferase activity. Interaction with importin alpha and beta is required for its nuclear localization, importin beta dissociating in response to RanGTP, allowing RNMT-importin alpha to bind RNA substrates. Interacts with elongating form of polymerase II and RNGTT. Interacts with RAMAC, this interaction significantly enhances RNA-binding and cap methyltransferase activity.

It is found in the nucleus. It carries out the reaction a 5'-end (5'-triphosphoguanosine)-ribonucleoside in mRNA + S-adenosyl-L-methionine = a 5'-end (N(7)-methyl 5'-triphosphoguanosine)-ribonucleoside in mRNA + S-adenosyl-L-homocysteine. With respect to regulation, methyltransferase activity is activated by RAMAC. Functionally, catalytic subunit of the mRNA-capping methyltransferase RNMT:RAMAC complex that methylates the N7 position of the added guanosine to the 5'-cap structure of mRNAs. Binds RNA containing 5'-terminal GpppC. In Rattus norvegicus (Rat), this protein is mRNA cap guanine-N(7) methyltransferase (Rnmt).